Reading from the N-terminus, the 279-residue chain is NADPH-dependent 7-cyano-7-deazaguanine reductase (279 aa).

86 to 88 (IES) provides a ligand contact to substrate. An NADPH-binding site is contributed by 88-89 (SK). Cys187 (thioimide intermediate) is an active-site residue. The Proton donor role is filled by Asp194. 226–227 (HE) is a substrate binding site. Residue 255–256 (RG) participates in NADPH binding.

It belongs to the GTP cyclohydrolase I family. QueF type 2 subfamily. Homodimer.

It localises to the cytoplasm. It catalyses the reaction 7-aminomethyl-7-carbaguanine + 2 NADP(+) = 7-cyano-7-deazaguanine + 2 NADPH + 3 H(+). Its pathway is tRNA modification; tRNA-queuosine biosynthesis. Its function is as follows. Catalyzes the NADPH-dependent reduction of 7-cyano-7-deazaguanine (preQ0) to 7-aminomethyl-7-deazaguanine (preQ1). The polypeptide is NADPH-dependent 7-cyano-7-deazaguanine reductase (Haemophilus influenzae (strain ATCC 51907 / DSM 11121 / KW20 / Rd)).